The following is a 185-amino-acid chain: Elongation factor P (185 aa).

It belongs to the elongation factor P family.

It localises to the cytoplasm. It participates in protein biosynthesis; polypeptide chain elongation. Its function is as follows. Involved in peptide bond synthesis. Stimulates efficient translation and peptide-bond synthesis on native or reconstituted 70S ribosomes in vitro. Probably functions indirectly by altering the affinity of the ribosome for aminoacyl-tRNA, thus increasing their reactivity as acceptors for peptidyl transferase. This Bacillus cereus (strain 03BB102) protein is Elongation factor P.